The chain runs to 379 residues: Homoserine O-succinyltransferase (379 aa).

The 310-residue stretch at Asn51–Leu360 folds into the AB hydrolase-1 domain. Residue Ser157 is the Nucleophile of the active site. Residue Arg227 coordinates substrate. Residues Asp323 and His356 contribute to the active site. Asp357 lines the substrate pocket.

Belongs to the AB hydrolase superfamily. MetX family. Homodimer.

The protein localises to the cytoplasm. The catalysed reaction is L-homoserine + succinyl-CoA = O-succinyl-L-homoserine + CoA. It functions in the pathway amino-acid biosynthesis; L-methionine biosynthesis via de novo pathway; O-succinyl-L-homoserine from L-homoserine: step 1/1. Its function is as follows. Transfers a succinyl group from succinyl-CoA to L-homoserine, forming succinyl-L-homoserine. The sequence is that of Homoserine O-succinyltransferase from Pseudomonas fluorescens (strain SBW25).